The primary structure comprises 33 residues: Alpha-amanitin proprotein (33 aa).

Residues methionine 1–proline 10 constitute a propeptide that is removed on maturation. Position 11 is a (3R,4R)-4,5-dihydroxyisoleucine; in form alpha-amanitin (isoleucine 11). (3R,4S)-4-hydroxyisoleucine; in form gamma-amanitin is present on isoleucine 11. The cyclopeptide (Ile-Pro) cross-link spans isoleucine 11–proline 18. The segment at residues tryptophan 12–cysteine 16 is a cross-link (2'-cysteinyl-6'-hydroxytryptophan sulfoxide (Trp-Cys)). The residue at position 18 (proline 18) is a 4-hydroxyproline. A propeptide spanning residues cysteine 19–alanine 33 is cleaved from the precursor.

Belongs to the MSDIN fungal toxin family. Post-translationally, processed by the macrocyclase-peptidase enzyme POPB to yield a toxic cyclic decapeptide. POPB first removes 10 residues from the N-terminus. Conformational trapping of the remaining peptide forces the enzyme to release this intermediate rather than proceed to macrocyclization. The enzyme rebinds the remaining peptide in a different conformation and catalyzes macrocyclization of the N-terminal 8 residues.

Its function is as follows. Major toxin belonging to the bicyclic octapeptides amatoxins that acts by binding non-competitively to RNA polymerase II and greatly slowing the elongation of transcripts from target promoters. This chain is Alpha-amanitin proprotein, found in Amanita pallidorosea.